Here is a 368-residue protein sequence, read N- to C-terminus: DNA replication and repair protein RecF (368 aa).

30–37 (GKNGTGKT) is an ATP binding site.

It belongs to the RecF family.

Its subcellular location is the cytoplasm. The RecF protein is involved in DNA metabolism; it is required for DNA replication and normal SOS inducibility. RecF binds preferentially to single-stranded, linear DNA. It also seems to bind ATP. The polypeptide is DNA replication and repair protein RecF (Chloroherpeton thalassium (strain ATCC 35110 / GB-78)).